The primary structure comprises 640 residues: Protein UL35 (640 aa).

Disordered stretches follow at residues E353–A373, A500–R571, and A586–L640. The segment covering G358–D367 has biased composition (acidic residues). Residues A500–A562 are compositionally biased toward low complexity. The span at S588 to S598 shows a compositional bias: basic residues. Positions D631–L640 are enriched in basic and acidic residues.

The protein belongs to the herpesviridae pp85 family. In terms of assembly, interacts with UL82. Interacts with isoform UL35A. Interacts with host UBP7; this interaction significantly inhibits the ability of USP7 to form nuclear bodies. Interacts with host DCAF1 (via C-terminus). Interacts with host SNX5; this interaction allows proper gB localization during viral assembly. Interacts with host TBK1; this interaction prevents type I interferon production. Interacts with UL82. Interacts with isoform UL35. Interacts with host UBP7; this interaction significantly inhibits the ability of USP7 to form nuclear bodies. Interacts with host SNX5; this interaction allows proper gB localization during viral assembly.

The protein resides in the virion tegument. It localises to the host nucleus. Its subcellular location is the host cytoplasm. Functionally, plays important role in immediate-early gene expression through interaction with UL82. Forms nuclear bodies in host nucleus, independently of PML. In turn, UL35 nuclear bodies associate with and remodel PML bodies. Through interaction with host DCAF1, causes cells to accumulate in the G2 phase of the cell cycle by inducing a DNA damage response. Regulates viral assembly by controlling the localization of the essential gB through regulation of a retrograde transport pathway. This modulation occurs via binding and inhibition of host sorting nexin 5/SNX5. Also plays a role in the inhibition of pattern recognition receptor-mediated type I interferon signaling at the level of TBK1. Its function is as follows. Promotes cytoplasmic UL82 accumulation and inhibits UL35-containing nuclear bodies formation. Regulates viral assembly by controlling the localization of the essential gB through regulation of a retrograde transport pathway. This modulation occurs via binding and inhibition of host sorting nexin 5/SNX5. This is Protein UL35 (UL35) from Homo sapiens (Human).